Reading from the N-terminus, the 278-residue chain is MENIIEVRNLKYKYDSESENYTLNDVSFQVKKGEWLSIVGHNGSGKSTTVRLIDGLLEAESGDIIISGDKLTAENVWEKRRQIGMVFQNPDNQFVGATVEDDVAFGLENQGLDYDLMVERVQQALELVGMQDFKEREPARLSGGQKQRVAVAGVVALRPDIIILDEATSMLDPEGRLDLIQTVKKIKDSNQLTVISITHDLDEIALSDRVLVMKEGQVESTATPRELFSREDLEELGLDQPFVNQVKVALRQSGLSLPDSYLTEKELQDQLWALLSKM.

The region spanning 5–240 is the ABC transporter domain; the sequence is IEVRNLKYKY…EDLEELGLDQ (236 aa). 40–47 serves as a coordination point for ATP; it reads GHNGSGKS.

The protein belongs to the ABC transporter superfamily. Energy-coupling factor EcfA family. As to quaternary structure, forms a stable energy-coupling factor (ECF) transporter complex composed of 2 membrane-embedded substrate-binding proteins (S component), 2 ATP-binding proteins (A component) and 2 transmembrane proteins (T component).

The protein localises to the cell membrane. Its function is as follows. ATP-binding (A) component of a common energy-coupling factor (ECF) ABC-transporter complex. Unlike classic ABC transporters this ECF transporter provides the energy necessary to transport a number of different substrates. In Streptococcus sanguinis (strain SK36), this protein is Energy-coupling factor transporter ATP-binding protein EcfA1.